Reading from the N-terminus, the 79-residue chain is Dolichyl-diphosphooligosaccharide--protein glycosyltransferase subunit TMEM258 (79 aa).

Helical transmembrane passes span 17–37 (VFPH…AWFF) and 55–75 (LISL…LLWV).

The protein belongs to the OST5 family. As to quaternary structure, component of the oligosaccharyltransferase (OST) complex.

It is found in the membrane. Its subcellular location is the endoplasmic reticulum. It localises to the cytoplasm. It participates in protein modification; protein glycosylation. Functionally, subunit of the oligosaccharyl transferase (OST) complex that catalyzes the initial transfer of a defined glycan (Glc(3)Man(9)GlcNAc(2) in eukaryotes) from the lipid carrier dolichol-pyrophosphate to an asparagine residue within an Asn-X-Ser/Thr consensus motif in nascent polypeptide chains, the first step in protein N-glycosylation. N-glycosylation occurs cotranslationally and the complex associates with the Sec61 complex at the channel-forming translocon complex that mediates protein translocation across the endoplasmic reticulum (ER). All subunits are required for a maximal enzyme activity. The protein is Dolichyl-diphosphooligosaccharide--protein glycosyltransferase subunit TMEM258 of Xenopus laevis (African clawed frog).